A 115-amino-acid polypeptide reads, in one-letter code: uncharacterized protein (115 aa).

This is an uncharacterized protein from Treponema pallidum (strain Nichols).